The following is a 130-amino-acid chain: Iron-sulfur cluster insertion protein ErpA (130 aa).

Iron-sulfur cluster contacts are provided by Cys46, Cys116, and Cys118.

The protein belongs to the HesB/IscA family. In terms of assembly, homodimer. Requires iron-sulfur cluster as cofactor.

Required for insertion of 4Fe-4S clusters for at least IspG. The protein is Iron-sulfur cluster insertion protein ErpA of Legionella pneumophila (strain Paris).